A 337-amino-acid polypeptide reads, in one-letter code: Lipoyl synthase (337 aa).

7 residues coordinate [4Fe-4S] cluster: Cys81, Cys86, Cys92, Cys107, Cys111, Cys114, and Ser323. Residues 93 to 312 form the Radical SAM core domain; that stretch reads FSHGTATFMI…EEYGNALGFS (220 aa).

Belongs to the radical SAM superfamily. Lipoyl synthase family. Requires [4Fe-4S] cluster as cofactor.

The protein localises to the cytoplasm. It catalyses the reaction [[Fe-S] cluster scaffold protein carrying a second [4Fe-4S](2+) cluster] + N(6)-octanoyl-L-lysyl-[protein] + 2 oxidized [2Fe-2S]-[ferredoxin] + 2 S-adenosyl-L-methionine + 4 H(+) = [[Fe-S] cluster scaffold protein] + N(6)-[(R)-dihydrolipoyl]-L-lysyl-[protein] + 4 Fe(3+) + 2 hydrogen sulfide + 2 5'-deoxyadenosine + 2 L-methionine + 2 reduced [2Fe-2S]-[ferredoxin]. It participates in protein modification; protein lipoylation via endogenous pathway; protein N(6)-(lipoyl)lysine from octanoyl-[acyl-carrier-protein]: step 2/2. Its function is as follows. Catalyzes the radical-mediated insertion of two sulfur atoms into the C-6 and C-8 positions of the octanoyl moiety bound to the lipoyl domains of lipoate-dependent enzymes, thereby converting the octanoylated domains into lipoylated derivatives. The chain is Lipoyl synthase from Xanthomonas oryzae pv. oryzae (strain MAFF 311018).